Reading from the N-terminus, the 49-residue chain is Large ribosomal subunit protein bL33 (49 aa).

This sequence belongs to the bacterial ribosomal protein bL33 family.

In Pseudothermotoga lettingae (strain ATCC BAA-301 / DSM 14385 / NBRC 107922 / TMO) (Thermotoga lettingae), this protein is Large ribosomal subunit protein bL33.